Here is a 970-residue protein sequence, read N- to C-terminus: GEM-interacting protein (970 aa).

Position 19 is a phosphoserine (serine 19). Disordered regions lie at residues 44 to 76, 224 to 263, and 377 to 478; these read PLLSEDPEPDKTPTATVTNEASCWSGPSPEGPV, SEDLRARSQGSPEDSAPQASPGPSKQQERRRRSREEAQAK, and PLDI…ENGL. Polar residues predominate over residues 56-65; the sequence is PTATVTNEAS. Phosphoserine is present on residues serine 71, serine 231, serine 234, serine 243, serine 437, and serine 441. Positions 81-344 constitute an F-BAR domain; sequence EELDLRLIRT…CCAPFEPGQR (264 aa). A compositionally biased stretch (polar residues) spans 231–246; that stretch reads SQGSPEDSAPQASPGP. Over residues 459–472 the composition is skewed to acidic residues; sequence SSDDFEERDPDLGD. Residues 493–537 form a Phorbol-ester/DAG-type zinc finger; it reads THQLRRLRGPAKCRECEAFMVSGTECEECFLTCHKRCLETLLILC. One can recognise a Rho-GAP domain in the interval 554 to 757; sequence LQLPRDFPEE…FLIVHYEQIF (204 aa). Threonine 660 bears the Phosphothreonine mark. The disordered stretch occupies residues 762-878; sequence LPQATEPPPQ…PVKYPRGGVR (117 aa). The segment covering 766 to 778 has biased composition (pro residues); that stretch reads TEPPPQDSSPAPG. A compositionally biased stretch (polar residues) spans 815-830; the sequence is EQHPTATPTEIPTPQS. Positions 831–844 are enriched in basic and acidic residues; it reads DQREDVAEDTKDGG. A compositionally biased stretch (polar residues) spans 847–863; the sequence is VSSQGPEDSLLGTQSRG. Phosphoserine occurs at positions 885, 907, 914, 919, and 923. A disordered region spans residues 897 to 932; sequence ETPITSVPRGSLRGRGPSPAAASPEGSPLRRTPLPK. Low complexity predominate over residues 910–923; sequence GRGPSPAAASPEGS.

As to quaternary structure, interacts with GEM through its N-terminal.

Functionally, stimulates, in vitro and in vivo, the GTPase activity of RhoA. This Homo sapiens (Human) protein is GEM-interacting protein (GMIP).